Consider the following 439-residue polypeptide: Trigger factor (439 aa).

Residues 175-260 form the PPIase FKBP-type domain; the sequence is SDKLVIDYQN…VKSVYVMKGM (86 aa).

It belongs to the FKBP-type PPIase family. Tig subfamily.

It is found in the cytoplasm. It catalyses the reaction [protein]-peptidylproline (omega=180) = [protein]-peptidylproline (omega=0). Involved in protein export. Acts as a chaperone by maintaining the newly synthesized protein in an open conformation. Functions as a peptidyl-prolyl cis-trans isomerase. This Ehrlichia chaffeensis (strain ATCC CRL-10679 / Arkansas) protein is Trigger factor.